Here is a 310-residue protein sequence, read N- to C-terminus: tRNA pseudouridine synthase B (310 aa).

Catalysis depends on D38, which acts as the Nucleophile.

Belongs to the pseudouridine synthase TruB family. Type 1 subfamily.

The enzyme catalyses uridine(55) in tRNA = pseudouridine(55) in tRNA. Responsible for synthesis of pseudouridine from uracil-55 in the psi GC loop of transfer RNAs. In Geotalea uraniireducens (strain Rf4) (Geobacter uraniireducens), this protein is tRNA pseudouridine synthase B.